The sequence spans 408 residues: Putative F-box protein At1g53550 (408 aa).

Residues 29 to 74 (TCYFDPIPVDLVINILSRLSLECIARCRCVSKLWSSIIRRPNYNQL) form the F-box domain.

This chain is Putative F-box protein At1g53550, found in Arabidopsis thaliana (Mouse-ear cress).